A 2067-amino-acid polypeptide reads, in one-letter code: Non-reducing polyketide synthase PKS12 (2067 aa).

Positions 4–241 are N-terminal acylcarrier protein transacylase (SAT) domain; that stretch reads FVFGDQSTRF…LPVPIYAPYH (238 aa). A disordered region spans residues 350–373; it reads NSMGPKASTSHSSAETQTESSSKN. Over residues 356–373 the composition is skewed to polar residues; the sequence is ASTSHSSAETQTESSSKN. In terms of domain architecture, Ketosynthase family 3 (KS3) spans 373–808; sequence NSKIAIVAMS…GGNSAVLLQD (436 aa). Catalysis depends on for beta-ketoacyl synthase activity residues Cys-545, His-680, and His-725. The tract at residues 912–1199 is malonyl-CoA:ACP transacylase (MAT) domain; sequence FVFSGQGAQY…VVCSTFLKSS (288 aa). The active-site For acyl/malonyl transferase activity is the Ser-1001. An N-terminal hotdog fold region spans residues 1297 to 1433; the sequence is QKILQETSLD…CELRLEHPSQ (137 aa). The 310-residue stretch at 1297–1606 folds into the PKS/mFAS DH domain; sequence QKILQETSLD…FQGLPRRVLN (310 aa). Residue His-1329 is the Proton acceptor; for dehydratase activity of the active site. The segment at 1329–1604 is product template (PT) domain; that stretch reads HRVNGVKVCT…ITFQGLPRRV (276 aa). The C-terminal hotdog fold stretch occupies residues 1460 to 1606; that stretch reads LDSMLATGMV…FQGLPRRVLN (147 aa). Asp-1519 serves as the catalytic Proton donor; for dehydratase activity. A disordered region spans residues 1619 to 1648; sequence APMGRRDVPPSRMDVPPVRSGEGPPTSAPT. One can recognise a Carrier domain in the interval 1660-1738; that stretch reads TSMDSRLRPL…SFKLFLGLVD (79 aa). O-(pantetheine 4'-phosphoryl)serine is present on Ser-1698. The interval 1742–1779 is disordered; the sequence is KSSSGSDGSGRSSPAPGIESGATTPPMSEEDQDKIVSS. The segment covering 1743–1754 has biased composition (low complexity); sequence SSSGSDGSGRSS. Residues 1781-2065 form a claisen cyclase domain region; that stretch reads SLHQFQASST…YVSAFLARAL (285 aa). Ser-1875 (for Claisen cyclase activity) is an active-site residue.

It catalyses the reaction 6 malonyl-CoA + acetyl-CoA + 6 H(+) = naphtopyrone YWA1 + 6 CO2 + 7 CoA + H2O. The protein operates within pigment biosynthesis. Functionally, non-reducing polyketide synthase; part of the gene cluster that mediates the biosynthesis of aurofusarin, a red mycelium pigment which is acting as a mycotoxin. The first step is performed by the polyketide synthase which condenses one acetyl-CoA and 6 malonyl-CoA units to form the first intermediate, the cyclic heptaketide and yellow pigment YWA1. The C2 hydroxyl group in the pyrone ring of YWA1 is probably formed during ring closure by an aldol-type cyclization reaction. The dehydratase aurZ then acts as the first tailoring enzyme in the aurofusarin biosynthetic pathway by converting YWA1 to nor-rubrofusarin. Nor-rubrofusarin is then methylated to rubrofusarin by the O-methyltransferase aurJ. Rubrofusarin is then transported across the plasma membrane by the rubrofusarin-specific pump aurT for further enzymatic processing by the extracellular complex composed of GIP1, aurF, aurO and aurS to yield aurofusarin. The chain is Non-reducing polyketide synthase PKS12 from Gibberella zeae (strain ATCC MYA-4620 / CBS 123657 / FGSC 9075 / NRRL 31084 / PH-1) (Wheat head blight fungus).